The primary structure comprises 270 residues: GTP cyclohydrolase FolE2 (270 aa).

It belongs to the GTP cyclohydrolase IV family.

It carries out the reaction GTP + H2O = 7,8-dihydroneopterin 3'-triphosphate + formate + H(+). Its pathway is cofactor biosynthesis; 7,8-dihydroneopterin triphosphate biosynthesis; 7,8-dihydroneopterin triphosphate from GTP: step 1/1. Functionally, converts GTP to 7,8-dihydroneopterin triphosphate. This is GTP cyclohydrolase FolE2 from Cupriavidus pinatubonensis (strain JMP 134 / LMG 1197) (Cupriavidus necator (strain JMP 134)).